The sequence spans 365 residues: Class I histocompatibility antigen, Gogo-C*0101/C*0102 alpha chain (365 aa).

Positions Met-1 to Ala-24 are cleaved as a signal peptide. The tract at residues Gly-25–Asp-114 is alpha-1. Residues Gly-25 to Ile-308 are Extracellular-facing. An N-linked (GlcNAc...) asparagine glycan is attached at Asn-110. The alpha-2 stretch occupies residues Gly-115 to Ala-206. 2 disulfides stabilise this stretch: Cys-125–Cys-188 and Cys-227–Cys-283. An alpha-3 region spans residues Asp-207–Trp-298. In terms of domain architecture, Ig-like C1-type spans Pro-209–Arg-297. The interval Glu-299 to Ile-308 is connecting peptide. The chain crosses the membrane as a helical span at residues Val-309 to Cys-332. At Arg-333–Ala-365 the chain is on the cytoplasmic side. Phosphoserine occurs at positions 356 and 359.

Belongs to the MHC class I family. As to quaternary structure, heterodimer of an alpha chain and a beta chain (beta-2-microglobulin).

It is found in the membrane. In terms of biological role, involved in the presentation of foreign antigens to the immune system. This Gorilla gorilla gorilla (Western lowland gorilla) protein is Class I histocompatibility antigen, Gogo-C*0101/C*0102 alpha chain.